Here is a 332-residue protein sequence, read N- to C-terminus: Hdr-like menaquinol oxidoreductase cytochrome b-like subunit (332 aa).

5 consecutive transmembrane segments (helical) span residues 3 to 23 (GVIFGVIVPYIAVAIFVIGVI), 97 to 117 (DARWLWLFGILFHYSLLLVLI), 143 to 163 (VFIPSVYMSGLAIVAALFLLW), 177 to 197 (LPSDHFALILLLAITISGNVM), and 230 to 250 (IEPIFYVHFALASFLLAYFPF).

Consists of five subunits: an integral membrane subunit, a cytochrome b-like subunit, a cytochrome c subunit and two iron-sulfur subunits.

The protein localises to the cell membrane. Functionally, has menaquinol-oxidizing activity. HmeC and HmeD subunits may together mediate electron transfer from menaquinol to an unidentified electron acceptor on the cytoplasmic side of the membrane. This is Hdr-like menaquinol oxidoreductase cytochrome b-like subunit (hmeC) from Archaeoglobus fulgidus (strain ATCC 49558 / DSM 4304 / JCM 9628 / NBRC 100126 / VC-16).